The chain runs to 110 residues: uncharacterized protein (110 aa).

The disordered stretch occupies residues 85–110; that stretch reads ARKAERPSQGGKDYNGTAKSAQSTTV. A compositionally biased stretch (polar residues) spans 101–110; it reads TAKSAQSTTV.

This is an uncharacterized protein from Saccharomyces cerevisiae (strain ATCC 204508 / S288c) (Baker's yeast).